Reading from the N-terminus, the 734-residue chain is Phosphoribosylformylglycinamidine synthase subunit PurL (734 aa).

His-49 is a catalytic residue. The ATP site is built by Tyr-52 and Lys-91. Residue Glu-93 coordinates Mg(2+). Substrate contacts are provided by residues 94–97 (SHNH) and Arg-116. His-95 (proton acceptor) is an active-site residue. Residue Asp-117 participates in Mg(2+) binding. Gln-240 contacts substrate. Asp-268 provides a ligand contact to Mg(2+). 312–314 (ESQ) is a substrate binding site. Asp-491 and Gly-528 together coordinate ATP. Asn-529 is a binding site for Mg(2+). Ser-531 serves as a coordination point for substrate.

The protein belongs to the FGAMS family. In terms of assembly, monomer. Part of the FGAM synthase complex composed of 1 PurL, 1 PurQ and 2 PurS subunits.

It is found in the cytoplasm. The enzyme catalyses N(2)-formyl-N(1)-(5-phospho-beta-D-ribosyl)glycinamide + L-glutamine + ATP + H2O = 2-formamido-N(1)-(5-O-phospho-beta-D-ribosyl)acetamidine + L-glutamate + ADP + phosphate + H(+). It participates in purine metabolism; IMP biosynthesis via de novo pathway; 5-amino-1-(5-phospho-D-ribosyl)imidazole from N(2)-formyl-N(1)-(5-phospho-D-ribosyl)glycinamide: step 1/2. In terms of biological role, part of the phosphoribosylformylglycinamidine synthase complex involved in the purines biosynthetic pathway. Catalyzes the ATP-dependent conversion of formylglycinamide ribonucleotide (FGAR) and glutamine to yield formylglycinamidine ribonucleotide (FGAM) and glutamate. The FGAM synthase complex is composed of three subunits. PurQ produces an ammonia molecule by converting glutamine to glutamate. PurL transfers the ammonia molecule to FGAR to form FGAM in an ATP-dependent manner. PurS interacts with PurQ and PurL and is thought to assist in the transfer of the ammonia molecule from PurQ to PurL. This Zymomonas mobilis subsp. mobilis (strain ATCC 31821 / ZM4 / CP4) protein is Phosphoribosylformylglycinamidine synthase subunit PurL.